A 281-amino-acid polypeptide reads, in one-letter code: Nucleotide-binding protein Tpet_1006 (281 aa).

ATP is bound at residue 9–16; sequence GLSGAGKT. 58–61 serves as a coordination point for GTP; sequence DVRS.

Belongs to the RapZ-like family.

Its function is as follows. Displays ATPase and GTPase activities. This Thermotoga petrophila (strain ATCC BAA-488 / DSM 13995 / JCM 10881 / RKU-1) protein is Nucleotide-binding protein Tpet_1006.